A 254-amino-acid chain; its full sequence is Alcohol dehydrogenase (254 aa).

10-33 is a binding site for NAD(+); it reads FVAGLGGIGLDTSKGIVKAGPKNL. A substrate-binding site is contributed by S138. The active-site Proton acceptor is the Y151.

This sequence belongs to the short-chain dehydrogenases/reductases (SDR) family. As to quaternary structure, homodimer.

It carries out the reaction a primary alcohol + NAD(+) = an aldehyde + NADH + H(+). It catalyses the reaction a secondary alcohol + NAD(+) = a ketone + NADH + H(+). This Drosophila immigrans (Fruit fly) protein is Alcohol dehydrogenase (Adh).